Consider the following 164-residue polypeptide: R-phycoerythrin alpha chain (164 aa).

The (2R,3E)-phycoerythrobilin site is built by Cys82 and Cys139.

The protein belongs to the phycobiliprotein family. As to quaternary structure, heterodimer of an alpha and a beta chain. In terms of processing, contains two covalently linked bilin chromophores.

The protein resides in the plastid. It is found in the chloroplast thylakoid membrane. Light-harvesting photosynthetic bile pigment-protein from the phycobiliprotein complex. In Pyropia haitanensis (Red seaweed), this protein is R-phycoerythrin alpha chain (cpeA).